The following is a 282-amino-acid chain: Bacterial lipoprotein FTN_1103 (282 aa).

The signal sequence occupies residues 1–28 (MKYGNLMMTKKKLLIGMVTISGIVILGS). Cys-29 is lipidated: N-palmitoyl cysteine. Residue Cys-29 is the site of S-diacylglycerol cysteine attachment.

Its subcellular location is the cell membrane. Stimulates the host immune inflammatory signaling system allowing the host to combat the bacteria. Stimulates mouse interleukin-6 (Il6) production. In Francisella tularensis subsp. novicida (strain U112), this protein is Bacterial lipoprotein FTN_1103.